A 339-amino-acid chain; its full sequence is Probable cytosolic iron-sulfur protein assembly protein CIAO1 (339 aa).

7 WD repeats span residues 14-53 (HPDS…WICK), 59-98 (GHQR…FECV), 103-142 (GHEN…EYEC), 148-187 (SHTQ…WVCC), 192-231 (GHES…NEQG), 250-289 (FHSR…DPQQ), and 301-339 (AHSQ…PEGL). The LYR motif; required for interaction with HSC20 signature appears at 176–178 (LYR).

This sequence belongs to the WD repeat CIA1 family. Component of the CIA complex. Interacts with CIAO2A and forms a complex with CIAO2B and MMS19; the interactions with CIAO2A and CIAO2B are mutually exclusive. Interacts with CHD1L, ERCC2, IREB2 and POLD1. Component of the MMXD complex, which includes CIAO1, ERCC2, CIAO2B, MMS19 and SLC25A5. Interacts with WT1. Interacts with CIAO3. Interacts (via LYR motif) with HSC20.

Its subcellular location is the cytoplasm. Its function is as follows. Key component of the cytosolic iron-sulfur protein assembly (CIA) complex, a multiprotein complex that mediates the incorporation of iron-sulfur cluster into extramitochondrial Fe/S proteins. As a CIA complex component, interacts specifically with CIAO2A or CIAO2B and MMS19 to assist different branches of iron-sulfur protein assembly, depending of its interactors. The complex CIAO1:CIAO2B:MMS19 binds to and facilitates the assembly of most cytosolic-nuclear Fe/S proteins. CIAO1:CIAO2A specifically matures ACO1 and stabilizes IREB2. Seems to specifically modulate the transactivation activity of WT1. As part of the mitotic spindle-associated MMXD complex it may play a role in chromosome segregation. The protein is Probable cytosolic iron-sulfur protein assembly protein CIAO1 of Homo sapiens (Human).